An 85-amino-acid polypeptide reads, in one-letter code: Small ribosomal subunit protein bS16c (85 aa).

Belongs to the bacterial ribosomal protein bS16 family.

Its subcellular location is the plastid. It localises to the chloroplast. The sequence is that of Small ribosomal subunit protein bS16c from Saccharum hybrid (Sugarcane).